The chain runs to 453 residues: Cobyrinate a,c-diamide synthase (453 aa).

The GATase cobBQ-type domain occupies Arg250–Asp440. Residue Cys332 is the Nucleophile of the active site.

Belongs to the CobB/CbiA family. Mg(2+) is required as a cofactor.

It carries out the reaction cob(II)yrinate + 2 L-glutamine + 2 ATP + 2 H2O = cob(II)yrinate a,c diamide + 2 L-glutamate + 2 ADP + 2 phosphate + 2 H(+). It catalyses the reaction Ni-sirohydrochlorin + 2 L-glutamine + 2 ATP + 2 H2O = Ni-sirohydrochlorin a,c-diamide + 2 L-glutamate + 2 ADP + 2 phosphate + 2 H(+). The protein operates within cofactor biosynthesis; adenosylcobalamin biosynthesis; cob(II)yrinate a,c-diamide from sirohydrochlorin (anaerobic route): step 10/10. Functionally, catalyzes the ATP-dependent amidation of the two carboxylate groups at positions a and c of cobyrinate, using either L-glutamine or ammonia as the nitrogen source. Involved in the biosynthesis of the unique nickel-containing tetrapyrrole coenzyme F430, the prosthetic group of methyl-coenzyme M reductase (MCR), which plays a key role in methanogenesis and anaerobic methane oxidation. Catalyzes the ATP-dependent amidation of the two carboxylate groups at positions a and c of Ni-sirohydrochlorin, using L-glutamine or ammonia as the nitrogen source. The chain is Cobyrinate a,c-diamide synthase from Methanosphaera stadtmanae (strain ATCC 43021 / DSM 3091 / JCM 11832 / MCB-3).